The primary structure comprises 302 residues: DDRGK domain-containing protein 1 (302 aa).

Residues 1-5 (MDGGG) lie on the Lumenal side of the membrane. Residues 6 to 26 (GMLGAVVCLLLVFAIFPLLLW) traverse the membrane as a helical segment. Residues 27–302 (RRRSDAAHRL…DENAAAGTEL (276 aa)) lie on the Cytoplasmic side of the membrane. 2 disordered regions span residues 36–151 (LPPQ…EEAR) and 279–302 (DLEP…GTEL). A compositionally biased stretch (acidic residues) spans 79-91 (VDDADSDLEEEIQ). Positions 103–151 (KRQDREAQRQAEEAARDSRRTKQDRYAEMRRKKDEEREAQERLMEEEAR) are enriched in basic and acidic residues.

This sequence belongs to the DDRGK1 family.

Its subcellular location is the endoplasmic reticulum membrane. Substrate adapter for ufmylation, the covalent attachment of the ubiquitin-like modifier UFM1 to substrate proteins. This is DDRGK domain-containing protein 1 from Oryza sativa subsp. japonica (Rice).